The chain runs to 488 residues: 1-deoxy-D-xylulose 5-phosphate reductoisomerase, apicoplastic (488 aa).

Residues 1–72 constitute an apicoplast transit peptide; that stretch reads MKKYIYIYFF…LCKKDLIDIG (72 aa). Residues 86–89 and 115–117 each bind NADP(+); these read TGSI and NKS. 1-deoxy-D-xylulose 5-phosphate is bound at residue lysine 205. Glutamate 206 contributes to the NADP(+) binding site. Aspartate 231 is a binding site for Mn(2+). Residues serine 232, glutamate 233, serine 270, and histidine 293 each contribute to the 1-deoxy-D-xylulose 5-phosphate site. Residue glutamate 233 coordinates Mn(2+). Residue glycine 299 participates in NADP(+) binding. Residues serine 306, asparagine 311, lysine 312, and glutamate 315 each coordinate 1-deoxy-D-xylulose 5-phosphate. Residue glutamate 315 coordinates Mn(2+).

The protein belongs to the DXR family. Homodimer. Mg(2+) serves as cofactor. The cofactor is Mn(2+).

It localises to the plastid. The protein resides in the apicoplast. The enzyme catalyses 2-C-methyl-D-erythritol 4-phosphate + NADP(+) = 1-deoxy-D-xylulose 5-phosphate + NADPH + H(+). The protein operates within isoprenoid biosynthesis; isopentenyl diphosphate biosynthesis via DXP pathway; isopentenyl diphosphate from 1-deoxy-D-xylulose 5-phosphate: step 1/6. With respect to regulation, inhibited by fosmidomycin and its derivatives. Functionally, catalyzes the NADPH-dependent rearrangement and reduction of 1-deoxy-D-xylulose-5-phosphate (DXP) to 2-C-methyl-D-erythritol 4-phosphate (MEP). This is 1-deoxy-D-xylulose 5-phosphate reductoisomerase, apicoplastic (DXR) from Plasmodium falciparum (isolate 3D7).